A 123-amino-acid polypeptide reads, in one-letter code: Large ribosomal subunit protein uL18 (123 aa).

The protein belongs to the universal ribosomal protein uL18 family. In terms of assembly, part of the 50S ribosomal subunit; part of the 5S rRNA/L5/L18/L25 subcomplex. Contacts the 5S and 23S rRNAs.

Functionally, this is one of the proteins that bind and probably mediate the attachment of the 5S RNA into the large ribosomal subunit, where it forms part of the central protuberance. This chain is Large ribosomal subunit protein uL18, found in Bifidobacterium adolescentis (strain ATCC 15703 / DSM 20083 / NCTC 11814 / E194a).